The primary structure comprises 388 residues: DNA polymerase processivity factor (388 aa).

Disordered stretches follow at residues 20-44 (EMER…TREP) and 306-388 (ESRF…RCVV). Positions 26-36 (RDHHRDHRDHR) are enriched in basic residues. The span at 306-328 (ESRFERMGKQDDGKGDRSHKNED) shows a compositional bias: basic and acidic residues.

Belongs to the herpesviridae polymerase accessory protein family.

Its function is as follows. Accessory subunit of the DNA polymerase that acts to increase the processivity of polymerization. The sequence is that of DNA polymerase processivity factor (U27) from Homo sapiens (Human).